The chain runs to 296 residues: 4-hydroxy-tetrahydrodipicolinate synthase (296 aa).

Residue T45 coordinates pyruvate. Catalysis depends on Y133, which acts as the Proton donor/acceptor. The active-site Schiff-base intermediate with substrate is K161. Residue I203 coordinates pyruvate.

The protein belongs to the DapA family. In terms of assembly, homotetramer; dimer of dimers.

The protein resides in the cytoplasm. It catalyses the reaction L-aspartate 4-semialdehyde + pyruvate = (2S,4S)-4-hydroxy-2,3,4,5-tetrahydrodipicolinate + H2O + H(+). It participates in amino-acid biosynthesis; L-lysine biosynthesis via DAP pathway; (S)-tetrahydrodipicolinate from L-aspartate: step 3/4. Functionally, catalyzes the condensation of (S)-aspartate-beta-semialdehyde [(S)-ASA] and pyruvate to 4-hydroxy-tetrahydrodipicolinate (HTPA). The chain is 4-hydroxy-tetrahydrodipicolinate synthase from Idiomarina loihiensis (strain ATCC BAA-735 / DSM 15497 / L2-TR).